We begin with the raw amino-acid sequence, 397 residues long: Probable transport protein MmpL6 (397 aa).

A run of 5 helical transmembrane segments spans residues 190-210 (YDLL…MMII), 214-234 (LVAA…SFGL), 242-262 (LLGI…LLAV), 293-313 (TGGV…SFVF), and 328-348 (LGLL…IAVL).

This sequence belongs to the resistance-nodulation-cell division (RND) (TC 2.A.6) family. MmpL subfamily.

The protein localises to the cell membrane. In Mycobacterium tuberculosis (strain CDC 1551 / Oshkosh), this protein is Probable transport protein MmpL6 (mmpL6).